Here is a 701-residue protein sequence, read N- to C-terminus: Triadin (701 aa).

Residues 1–28 form a disordered region; the sequence is MTEITAEGNASTTTTVIDSKNGSVPKSP. Over 1 to 47 the chain is Cytoplasmic; it reads MTEITAEGNASTTTTVIDSKNGSVPKSPGKVLKRTVTEDIVTTFSSP. Over residues 8–24 the composition is skewed to polar residues; sequence GNASTTTTVIDSKNGSV. Residues 48–68 traverse the membrane as a helical segment; the sequence is AAWLLVIALIITWSAVAVVMF. Residues 69 to 701 are Lumenal-facing; it reads DLVDYKNFSA…SSPGQKQQGQ (633 aa). N-linked (GlcNAc...) asparagine glycosylation is present at asparagine 75. Residues 117-130 show a composition bias toward acidic residues; the sequence is DGDEDDDDGDEDTD. Disordered regions lie at residues 117–256, 273–654, and 676–701; these read DGDE…KHEQ, GDLR…TKRQ, and FPVTPAYRPGESSGQPSSPGQKQQGQ. 6 stretches are compositionally biased toward basic and acidic residues: residues 131 to 256, 303 to 351, 365 to 385, 391 to 426, 437 to 485, and 492 to 643; these read KGEI…KHEQ, EGKE…KAPE, AKKDEKKEDSKKTKTPVEEHP, EKKEKYVEPAKSSKKEHSAPSEKQVKAKTERAKEET, GKKE…EVKP, and VKKE…KAKE. Residue asparagine 617 is glycosylated (N-linked (GlcNAc...) asparagine). Residues 684–701 are compositionally biased toward low complexity; that stretch reads PGESSGQPSSPGQKQQGQ.

In terms of assembly, homooligomer of variable subunit number; disulfide-linked. Interacts with CASQ1 and RYR1 in skeletal muscle. Interacts with CASQ2. In terms of processing, phosphorylated by CaMK2. Post-translationally, N-glycosylated. In terms of tissue distribution, detected in heart (at protein level). Skeletal and cardiac muscle.

It is found in the sarcoplasmic reticulum membrane. In terms of biological role, contributes to the regulation of lumenal Ca2+ release via the sarcoplasmic reticulum calcium release channels RYR1 and RYR2, a key step in triggering skeletal and heart muscle contraction. Required for normal organization of the triad junction, where T-tubules and the sarcoplasmic reticulum terminal cisternae are in close contact. Required for normal skeletal muscle strength. Plays a role in excitation-contraction coupling in the heart and in regulating the rate of heart beats. This chain is Triadin (TRDN), found in Canis lupus familiaris (Dog).